We begin with the raw amino-acid sequence, 431 residues long: Enolase (431 aa).

Position 163 (Gln163) interacts with (2R)-2-phosphoglycerate. The active-site Proton donor is the Glu205. Positions 242, 288, and 315 each coordinate Mg(2+). Lys340, Arg369, Ser370, and Lys391 together coordinate (2R)-2-phosphoglycerate. The Proton acceptor role is filled by Lys340.

It belongs to the enolase family. The cofactor is Mg(2+).

The protein resides in the cytoplasm. The protein localises to the secreted. It is found in the cell surface. It catalyses the reaction (2R)-2-phosphoglycerate = phosphoenolpyruvate + H2O. Its pathway is carbohydrate degradation; glycolysis; pyruvate from D-glyceraldehyde 3-phosphate: step 4/5. Functionally, catalyzes the reversible conversion of 2-phosphoglycerate (2-PG) into phosphoenolpyruvate (PEP). It is essential for the degradation of carbohydrates via glycolysis. In Bacillus anthracis (strain A0248), this protein is Enolase.